A 606-amino-acid chain; its full sequence is Membrane protein insertase YidC (606 aa).

The helical transmembrane segment at 8–28 (LILATALSFIVILVWFVLFPP) threads the bilayer. Residues 33–59 (MPLTGETSTELTPDAATGSLPSVTSDT) form a disordered region. 6 consecutive transmembrane segments (helical) span residues 116–136 (IVTMLSPVGSPGAYYALYGWA), 348–368 (FIDSIDWGWFFFLTKPIFFLL), 374–394 (FIGNMGWAIIGLTLIIKAILL), 448–468 (LPILLQIPIFFSLYKVIFVTI), 506–526 (SIMALIFIGILPLLLGISMWL), and 542–562 (IFAWMPWVFMFMLGGFASGLV).

This sequence belongs to the OXA1/ALB3/YidC family. Type 1 subfamily. As to quaternary structure, interacts with the Sec translocase complex via SecD. Specifically interacts with transmembrane segments of nascent integral membrane proteins during membrane integration.

The protein resides in the cell inner membrane. Functionally, required for the insertion and/or proper folding and/or complex formation of integral membrane proteins into the membrane. Involved in integration of membrane proteins that insert both dependently and independently of the Sec translocase complex, as well as at least some lipoproteins. Aids folding of multispanning membrane proteins. This Roseobacter denitrificans (strain ATCC 33942 / OCh 114) (Erythrobacter sp. (strain OCh 114)) protein is Membrane protein insertase YidC.